The chain runs to 315 residues: Ribosomal protein L11 methyltransferase (315 aa).

S-adenosyl-L-methionine-binding residues include Thr-163, Gly-185, Asp-207, and Asn-249.

Belongs to the methyltransferase superfamily. PrmA family.

Its subcellular location is the cytoplasm. It carries out the reaction L-lysyl-[protein] + 3 S-adenosyl-L-methionine = N(6),N(6),N(6)-trimethyl-L-lysyl-[protein] + 3 S-adenosyl-L-homocysteine + 3 H(+). In terms of biological role, methylates ribosomal protein L11. In Lactobacillus helveticus (strain DPC 4571), this protein is Ribosomal protein L11 methyltransferase.